A 535-amino-acid chain; its full sequence is Cytochrome c oxidase subunit 1 (535 aa).

The helical transmembrane segment at 15–37 threads the bilayer; the sequence is IAILYFIFSTFCGLAGTAMSFII. The Ca(2+) site is built by glutamate 40, alanine 43, and glycine 45. Transmembrane regions (helical) follow at residues 58 to 80, 147 to 169, 190 to 212, 238 to 260, and 267 to 289; these read VLVT…IGGF, LAIF…FIVT, ILIT…TMLL, WFFG…SHIV, and PVFG…FLVW. Histidine 63 is a Fe(II)-heme a binding site. Histidine 242 contributes to the Cu cation binding site. Positions 242 to 246 form a cross-link, 1'-histidyl-3'-tyrosine (His-Tyr); that stretch reads HPEVY. An O2-binding site is contributed by tyrosine 246. Cu cation-binding residues include histidine 291 and histidine 292. The next 2 membrane-spanning stretches (helical) occupy residues 304–326 and 339–361; these read AYFT…SWLT and MLYT…VLAN. Mg(2+) is bound by residues histidine 369 and aspartate 370. Transmembrane regions (helical) follow at residues 376-398 and 415-437; these read THFH…YYWS and FWLI…INGM. Heme a3 is bound at residue histidine 377. Histidine 379 is a Fe(II)-heme a binding site. Position 442 (proline 442) interacts with Ca(2+). The helical transmembrane segment at 452–474 threads the bilayer; the sequence is NLVSSFGSMMTIMSLMLFTYIIY.

It belongs to the heme-copper respiratory oxidase family. As to quaternary structure, component of the cytochrome c oxidase (complex IV, CIV), a multisubunit enzyme composed of a catalytic core of 3 subunits and several supernumerary subunits. The complex exists as a monomer or a dimer and forms supercomplexes (SCs) in the inner mitochondrial membrane with ubiquinol-cytochrome c oxidoreductase (cytochrome b-c1 complex, complex III, CIII). Heme serves as cofactor. The cofactor is Cu cation.

It localises to the mitochondrion inner membrane. It carries out the reaction 4 Fe(II)-[cytochrome c] + O2 + 8 H(+)(in) = 4 Fe(III)-[cytochrome c] + 2 H2O + 4 H(+)(out). It functions in the pathway energy metabolism; oxidative phosphorylation. Component of the cytochrome c oxidase, the last enzyme in the mitochondrial electron transport chain which drives oxidative phosphorylation. The respiratory chain contains 3 multisubunit complexes succinate dehydrogenase (complex II, CII), ubiquinol-cytochrome c oxidoreductase (cytochrome b-c1 complex, complex III, CIII) and cytochrome c oxidase (complex IV, CIV), that cooperate to transfer electrons derived from NADH and succinate to molecular oxygen, creating an electrochemical gradient over the inner membrane that drives transmembrane transport and the ATP synthase. Cytochrome c oxidase is the component of the respiratory chain that catalyzes the reduction of oxygen to water. Electrons originating from reduced cytochrome c in the intermembrane space (IMS) are transferred via the dinuclear copper A center (CU(A)) of subunit 2 and heme A of subunit 1 to the active site in subunit 1, a binuclear center (BNC) formed by heme A3 and copper B (CU(B)). The BNC reduces molecular oxygen to 2 water molecules using 4 electrons from cytochrome c in the IMS and 4 protons from the mitochondrial matrix. This chain is Cytochrome c oxidase subunit 1 (COX1), found in Eremothecium gossypii (strain ATCC 10895 / CBS 109.51 / FGSC 9923 / NRRL Y-1056) (Yeast).